Here is a 412-residue protein sequence, read N- to C-terminus: Tryptophan 2,3-dioxygenase (412 aa).

Substrate contacts are provided by residues 79–83 (FIVVH), tyrosine 146, and arginine 150. Residue histidine 346 coordinates heme. Threonine 360 contacts substrate.

Belongs to the tryptophan 2,3-dioxygenase family. In terms of assembly, homotetramer. Heme serves as cofactor.

The catalysed reaction is L-tryptophan + O2 = N-formyl-L-kynurenine. Its pathway is amino-acid degradation; L-tryptophan degradation via kynurenine pathway; L-kynurenine from L-tryptophan: step 1/2. Heme-dependent dioxygenase that catalyzes the oxidative cleavage of the L-tryptophan (L-Trp) pyrrole ring and converts L-tryptophan to N-formyl-L-kynurenine. Catalyzes the oxidative cleavage of the indole moiety. The polypeptide is Tryptophan 2,3-dioxygenase (Sorangium cellulosum (strain So ce56) (Polyangium cellulosum (strain So ce56))).